The chain runs to 205 residues: High frequency lysogenization protein HflD homolog (205 aa).

It belongs to the HflD family.

The protein localises to the cytoplasm. The protein resides in the cell inner membrane. The chain is High frequency lysogenization protein HflD homolog from Shewanella piezotolerans (strain WP3 / JCM 13877).